The chain runs to 151 residues: Ribosome maturation factor RimP (151 aa).

This sequence belongs to the RimP family.

The protein localises to the cytoplasm. Functionally, required for maturation of 30S ribosomal subunits. The protein is Ribosome maturation factor RimP of Shewanella woodyi (strain ATCC 51908 / MS32).